Consider the following 184-residue polypeptide: Ribosome maturation factor RimM (184 aa).

Residues 104-184 enclose the PRC barrel domain; the sequence is SEDEFYWREL…RIEVDWDPGF (81 aa).

It belongs to the RimM family. Binds ribosomal protein uS19.

It is found in the cytoplasm. Its function is as follows. An accessory protein needed during the final step in the assembly of 30S ribosomal subunit, possibly for assembly of the head region. Essential for efficient processing of 16S rRNA. May be needed both before and after RbfA during the maturation of 16S rRNA. It has affinity for free ribosomal 30S subunits but not for 70S ribosomes. The polypeptide is Ribosome maturation factor RimM (Vibrio atlanticus (strain LGP32) (Vibrio splendidus (strain Mel32))).